Reading from the N-terminus, the 466-residue chain is Ceramide glucosyltransferase 1 (466 aa).

Residues 70-90 (LALSGCIFVSVLYLVHIIAFF) form a helical membrane-spanning segment. A short sequence motif (D1) is located at residue Asp-148. Position 200 (Asp-200) is a short sequence motif, D2. Residue Asp-294 is a short sequence motif, D3. Catalysis depends on Asp-294, which acts as the Proton acceptor. Positions 330-334 (RIGRW) match the (Q/R)XXRW motif. 2 helical membrane-spanning segments follow: residues 354-374 (CVTS…YSVY) and 403-423 (TPFL…FIFI).

It belongs to the glycosyltransferase 2 family. Expressed in excretory canals, pharyngeal intestinal valve, intestine and intestinal rectal valve.

It localises to the membrane. The catalysed reaction is an N-acylsphing-4-enine + UDP-alpha-D-glucose = a beta-D-glucosyl-(1&lt;-&gt;1')-N-acylsphing-4-enine + UDP + H(+). The enzyme catalyses an N-acyl-15-methylhexadecasphing-4-enine + UDP-alpha-D-glucose = an N-acyl-1-beta-D-glucosyl-15-methylhexadecasphing-4-enine + UDP + H(+). The protein operates within lipid metabolism; sphingolipid metabolism. Its function is as follows. Catalyzes the first glycosylation step in glycosphingolipid biosynthesis, the transfer of glucose to ceramide to produce glucosylceramides (GlcCer). GlcCer are known to contribute to the physical properties and physiological functions of membranes and may regulate signal transduction. Only branched-chain sphingoid bases like 15-methylhexadecasphing-4-enine are used for generating complex sphingolipids in Caenorhabditis elegans. Together with cgt-3, plays a role in the trafficking of proteins such as mig-14 to the cell membrane in intestinal cells. The protein is Ceramide glucosyltransferase 1 of Caenorhabditis elegans.